A 415-amino-acid polypeptide reads, in one-letter code: Gamma-glutamyl phosphate reductase (415 aa).

Belongs to the gamma-glutamyl phosphate reductase family.

The protein localises to the cytoplasm. The enzyme catalyses L-glutamate 5-semialdehyde + phosphate + NADP(+) = L-glutamyl 5-phosphate + NADPH + H(+). It participates in amino-acid biosynthesis; L-proline biosynthesis; L-glutamate 5-semialdehyde from L-glutamate: step 2/2. Catalyzes the NADPH-dependent reduction of L-glutamate 5-phosphate into L-glutamate 5-semialdehyde and phosphate. The product spontaneously undergoes cyclization to form 1-pyrroline-5-carboxylate. The sequence is that of Gamma-glutamyl phosphate reductase from Clostridium perfringens (strain SM101 / Type A).